The chain runs to 450 residues: Phosphoglucosamine mutase (450 aa).

S102 functions as the Phosphoserine intermediate in the catalytic mechanism. Residues S102, D243, D245, and D247 each coordinate Mg(2+). Position 102 is a phosphoserine (S102).

The protein belongs to the phosphohexose mutase family. Mg(2+) serves as cofactor. Activated by phosphorylation.

The enzyme catalyses alpha-D-glucosamine 1-phosphate = D-glucosamine 6-phosphate. Catalyzes the conversion of glucosamine-6-phosphate to glucosamine-1-phosphate. This Agrobacterium fabrum (strain C58 / ATCC 33970) (Agrobacterium tumefaciens (strain C58)) protein is Phosphoglucosamine mutase.